The primary structure comprises 337 residues: Large ribosomal subunit protein uL3 (337 aa).

The tract at residues 1 to 20 (MASIHRPKRGSLAFSPRKRA) is disordered.

The protein belongs to the universal ribosomal protein uL3 family. In terms of assembly, part of the 50S ribosomal subunit. Forms a cluster with proteins L14 and L24e.

One of the primary rRNA binding proteins, it binds directly near the 3'-end of the 23S rRNA, where it nucleates assembly of the 50S subunit. This Methanosarcina acetivorans (strain ATCC 35395 / DSM 2834 / JCM 12185 / C2A) protein is Large ribosomal subunit protein uL3.